The following is a 189-amino-acid chain: Apolipoprotein D (189 aa).

Residues Met1–Gly20 form the signal peptide. Pyrrolidone carboxylic acid is present on Gln21. Cystine bridges form between Cys28–Cys134 and Cys61–Cys185. 2 N-linked (GlcNAc...) (complex) asparagine glycosylation sites follow: Asn65 and Asn98.

The protein belongs to the calycin superfamily. Lipocalin family. Homodimer. In plasma, also exists as a disulfide-linked heterodimer with APOA2. Post-translationally, N-glycosylated. N-glycan heterogeneity at Asn-65: Hex5HexNAc4 (major) and Hex6HexNAc5 (minor); at Asn-98: Hex5HexNAc4 (minor), dHex1Hex5HexNAc4 (major), dHex1Hex6HexNAc5 (minor) and dHex1Hex7HexNAc6 (minor). As to expression, expressed in liver, intestine, pancreas, kidney, placenta, adrenal, spleen, fetal brain tissue and tears.

It is found in the secreted. Its function is as follows. APOD occurs in the macromolecular complex with lecithin-cholesterol acyltransferase. It is probably involved in the transport and binding of bilin. Appears to be able to transport a variety of ligands in a number of different contexts. In Homo sapiens (Human), this protein is Apolipoprotein D (APOD).